The primary structure comprises 589 residues: PTS system mannitol-specific EIICB component (589 aa).

Residues 1-25 (MEEKVSLKVRVQKLGTSLSNMVMPN) lie on the Cytoplasmic side of the membrane. In terms of domain architecture, PTS EIIC type-2 spans 14–347 (LGTSLSNMVM…LHADKSTEDS (334 aa)). A helical membrane pass occupies residues 26–47 (IGAFIAWGVLTALFIADGYLPN). Over 48–51 (EQLA) the chain is Extracellular. A helical membrane pass occupies residues 52–72 (TVVGPMLTYLLPILIGYTGGY). The Cytoplasmic portion of the chain corresponds to 73–135 (MIHGQRGAVV…PGFEMLVNNF (63 aa)). The chain crosses the membrane as a helical span at residues 136–157 (SAGLVGFALLLLAFYAIGPVVS). Residues 158 to 166 (TLTGAVGNG) lie on the Extracellular side of the membrane. A helical membrane pass occupies residues 167 to 187 (VEAIVNARLLPMANIIIEPAK). At 188 to 274 (VLFLNNALNH…VMMKPTLFLA (87 aa)) the chain is on the cytoplasmic side. The chain crosses the membrane as a helical span at residues 275 to 294 (AMAGGISGTFTFQLLDAGLK). Over 295-316 (SPASPGSIIAIMATAPKGVWPH) the chain is Extracellular. A helical transmembrane segment spans residues 317–338 (LNILLGVLVAAVVSFLIAALIL). The Cytoplasmic segment spans residues 339–589 (HADKSTEDSL…YDKMAARMYK (251 aa)). The region spanning 381–476 (EKIIFACDAG…SLTGASPIAE (96 aa)) is the PTS EIIB type-2 domain. Cys-387 functions as the Phosphocysteine intermediate; for EIIB activity in the catalytic mechanism. At Cys-387 the chain carries Phosphocysteine; by EIIA.

In terms of assembly, homodimer.

It is found in the cell membrane. The catalysed reaction is D-mannitol(out) + N(pros)-phospho-L-histidyl-[protein] = D-mannitol 1-phosphate(in) + L-histidyl-[protein]. Its function is as follows. The phosphoenolpyruvate-dependent sugar phosphotransferase system (sugar PTS), a major carbohydrate active transport system, catalyzes the phosphorylation of incoming sugar substrates concomitantly with their translocation across the cell membrane. The enzyme II CmtAB PTS system is involved in D-mannitol transport. The polypeptide is PTS system mannitol-specific EIICB component (mtlA) (Streptococcus pneumoniae (strain ATCC BAA-255 / R6)).